The sequence spans 217 residues: Oxygen-insensitive NAD(P)H nitroreductase (217 aa).

10–14 (RYSTK) contacts FMN. 5 residues coordinate NAD(+): Lys-14, Thr-41, Asn-71, Lys-74, and Arg-107. Asn-71 contributes to the FMN binding site. FMN is bound by residues 165–166 (EG) and 205–207 (KSR).

The protein belongs to the nitroreductase family. Homodimer. The cofactor is FMN.

Its function is as follows. Reduction of a variety of nitroaromatic compounds using NADH (and to lesser extent NADPH) as source of reducing equivalents; two electrons are transferred. Capable of reducing nitrofurazone. The chain is Oxygen-insensitive NAD(P)H nitroreductase from Salmonella typhimurium (strain LT2 / SGSC1412 / ATCC 700720).